A 166-amino-acid chain; its full sequence is MRILSIEPLSKAAFAPFGEVIETEGSDYFMINGGSTRRYHALAEVQTSAPEDRAIVSIFVARALPMPLTIRMLERHPLGSQAFVPLRGNPFLIVVAPPGDAPRPEQVRVFLGNGRQGVNYQRGVWHHPVLALLDDDEFLVIDRSGAGPNCDEHFFGEDEQLLLHRP.

It belongs to the ureidoglycolate lyase family. In terms of assembly, homodimer. Ni(2+) serves as cofactor.

The enzyme catalyses (S)-ureidoglycolate = urea + glyoxylate. It functions in the pathway nitrogen metabolism; (S)-allantoin degradation. Functionally, catalyzes the catabolism of the allantoin degradation intermediate (S)-ureidoglycolate, generating urea and glyoxylate. Involved in the utilization of allantoin as nitrogen source. This Azotobacter vinelandii (strain DJ / ATCC BAA-1303) protein is Ureidoglycolate lyase.